Reading from the N-terminus, the 78-residue chain is Large ribosomal subunit protein bL28 (78 aa).

The protein belongs to the bacterial ribosomal protein bL28 family.

This is Large ribosomal subunit protein bL28 from Psychrobacter sp. (strain PRwf-1).